Here is a 378-residue protein sequence, read N- to C-terminus: Carbamoyl phosphate synthase small chain (378 aa).

Positions 1–189 (MTKPAILALA…DSHPEIPAGE (189 aa)) are CPSase. 3 residues coordinate L-glutamine: Ser-47, Gly-241, and Gly-243. Residues 193–378 (HVVAYDYGVK…RFISAMAERR (186 aa)) form the Glutamine amidotransferase type-1 domain. Cys-269 functions as the Nucleophile in the catalytic mechanism. Residues Leu-270, Gln-273, Asn-311, Gly-313, and Phe-314 each coordinate L-glutamine. Residues His-353 and Glu-355 contribute to the active site.

The protein belongs to the CarA family. Composed of two chains; the small (or glutamine) chain promotes the hydrolysis of glutamine to ammonia, which is used by the large (or ammonia) chain to synthesize carbamoyl phosphate. Tetramer of heterodimers (alpha,beta)4.

It catalyses the reaction hydrogencarbonate + L-glutamine + 2 ATP + H2O = carbamoyl phosphate + L-glutamate + 2 ADP + phosphate + 2 H(+). The enzyme catalyses L-glutamine + H2O = L-glutamate + NH4(+). It participates in amino-acid biosynthesis; L-arginine biosynthesis; carbamoyl phosphate from bicarbonate: step 1/1. The protein operates within pyrimidine metabolism; UMP biosynthesis via de novo pathway; (S)-dihydroorotate from bicarbonate: step 1/3. In terms of biological role, small subunit of the glutamine-dependent carbamoyl phosphate synthetase (CPSase). CPSase catalyzes the formation of carbamoyl phosphate from the ammonia moiety of glutamine, carbonate, and phosphate donated by ATP, constituting the first step of 2 biosynthetic pathways, one leading to arginine and/or urea and the other to pyrimidine nucleotides. The small subunit (glutamine amidotransferase) binds and cleaves glutamine to supply the large subunit with the substrate ammonia. The chain is Carbamoyl phosphate synthase small chain from Pseudomonas aeruginosa (strain ATCC 15692 / DSM 22644 / CIP 104116 / JCM 14847 / LMG 12228 / 1C / PRS 101 / PAO1).